We begin with the raw amino-acid sequence, 129 residues long: Beta-galactoside-binding lectin (129 aa).

Residue Ser-1 is modified to N-acetylserine. Residues 4–129 (GVVDERMSFK…EARIYSIEIK (126 aa)) enclose the Galectin domain. 69–75 (WGTEQRE) lines the a beta-D-galactoside pocket.

Its function is as follows. This protein binds beta-galactoside. Its physiological function is not yet known. The protein is Beta-galactoside-binding lectin of Electrophorus electricus (Electric eel).